Here is a 285-residue protein sequence, read N- to C-terminus: Large ribosomal subunit protein uL2 (285 aa).

The tract at residues 215–285 (GRSRHKGIRP…IIRNRKGEQY (71 aa)) is disordered. Positions 256–272 (WGKRHMGVKTRNMKKHS) are enriched in basic residues.

The protein belongs to the universal ribosomal protein uL2 family. Part of the 50S ribosomal subunit. Forms a bridge to the 30S subunit in the 70S ribosome.

Its function is as follows. One of the primary rRNA binding proteins. Required for association of the 30S and 50S subunits to form the 70S ribosome, for tRNA binding and peptide bond formation. It has been suggested to have peptidyltransferase activity; this is somewhat controversial. Makes several contacts with the 16S rRNA in the 70S ribosome. The polypeptide is Large ribosomal subunit protein uL2 (Mycoplasma genitalium (strain ATCC 33530 / DSM 19775 / NCTC 10195 / G37) (Mycoplasmoides genitalium)).